We begin with the raw amino-acid sequence, 343 residues long: Flavonoid 4'-O-methyltransferase 4 (343 aa).

Asp-211 lines the S-adenosyl-L-methionine pocket. His-249 serves as the catalytic Proton acceptor.

It belongs to the class I-like SAM-binding methyltransferase superfamily. Cation-independent O-methyltransferase family. Homodimer.

The catalysed reaction is apigenin + S-adenosyl-L-methionine = acacetin + S-adenosyl-L-homocysteine + H(+). It carries out the reaction kaempferol + S-adenosyl-L-methionine = kaempferide + S-adenosyl-L-homocysteine + H(+). It catalyses the reaction isorhamnetin + S-adenosyl-L-methionine = 3',4'-O-dimethylquercetin + S-adenosyl-L-homocysteine + 2 H(+). The enzyme catalyses scutellarein + S-adenosyl-L-methionine = scutellarein 4'-methyl ether + S-adenosyl-L-homocysteine + H(+). The catalysed reaction is (2S)-naringenin + S-adenosyl-L-methionine = (2S)-naringenin 4'-methyl ether + S-adenosyl-L-homocysteine + H(+). It carries out the reaction 4',7,8-trihydroxyflavone + S-adenosyl-L-methionine = 7,8-dihydroxy-4'-methoxyflavone + S-adenosyl-L-homocysteine + H(+). It catalyses the reaction taxifolin + S-adenosyl-L-methionine = taxifolin 4'-methyl ether + S-adenosyl-L-homocysteine + H(+). It functions in the pathway flavonoid metabolism. Functionally, flavonoid 4'-O-methyltransferase involved in the biosynthesis of polymethoxylated flavonoids natural products such as pebrellin, aroma compounds which contribute to the flavor of peppermint, and exhibit pharmacological activities such as anti-allergic, anti-oxidant, antibacterial, anti-proliferative, and anti-inflammatory effects. Catalyzes S-adenosylmethionine-dependent regioselective 4'-O-methylation of flavonoids; active on various hydroxylated flavonoid substrates, including isorhamnetin, kaempferol, apigenin (API), scutellarein (6-hydroxy-apigenin, 6-OH-API, SCU), taxifolin, 7,8,4'-trihydroxy-flavone and naringenin (NAR), and, with a lower efficiency, quercetin, rhamnetin, luteolin (LUT) and 7,8,3',4'-tetrahydroxy-flavone. This is Flavonoid 4'-O-methyltransferase 4 from Mentha piperita (Peppermint).